The chain runs to 438 residues: Battenin (438 aa).

A disordered region spans residues 1-25; the sequence is MGGCAGSRRRLSDSEGEETVPEPRL. Over 1–37 the chain is Cytoplasmic; sequence MGGCAGSRRRLSDSEGEETVPEPRLPLLDHQGAHWKN. Serine 12 and serine 14 each carry phosphoserine. The helical transmembrane segment at 38–58 threads the bilayer; sequence AVGFWLLGLCNNFSYVVMLSA. Residues 59 to 127 are Lumenal-facing; sequence AHDILSHERT…GLHLLPYSPR (69 aa). N-linked (GlcNAc...) asparagine glycans are attached at residues asparagine 71 and asparagine 85. A helical transmembrane segment spans residues 128-148; it reads VLVSGICAAGSFVLVAFSHSV. Topologically, residues 149-151 are cytoplasmic; sequence GTS. Residues 152–172 form a helical membrane-spanning segment; that stretch reads LCGVVLASISSGLGEVTFLSL. Over 173–182 the chain is Lumenal; sequence TAFYPRAVIS. The helical transmembrane segment at 183 to 203 threads the bilayer; the sequence is WWSSGTGGAGLLGALSYLGLT. Topologically, residues 204-277 are cytoplasmic; it reads QAGLSPQQTL…SLSLRERWTV (74 aa). Residues 237-268 form a disordered region; sequence QDPGGEEEAESSARQPLIRTEAPESKPGSSSS. The Lysosomal targeting motif motif lies at 242-244; sequence EEE. The Lysosomal targeting motif. Required for AP1G1, AP2A2 and AP3D1 interaction signature appears at 253–254; the sequence is LI. A helical transmembrane segment spans residues 278–298; sequence FKGLLWYIVPLVVVYFAEYFI. The Lumenal portion of the chain corresponds to 299–346; sequence NQGLFELLFFRNTSLSHAQQYRWYQMLYQAGVFASRSSLRCCHIRFTW. Residue asparagine 310 is glycosylated (N-linked (GlcNAc...) asparagine). Residues 347 to 367 form a helical membrane-spanning segment; the sequence is ALALLQCLNLAFLLADVWFGF. Over 368 to 438 the chain is Cytoplasmic; it reads LLSIYFVFLI…PLHDFLCQLS (71 aa). Residues 409–419 carry the Lysosomal targeting motif motif; the sequence is MATTCISDTLG. A Cysteine methyl ester modification is found at cysteine 435. Cysteine 435 carries S-farnesyl cysteine lipidation. A propeptide spans 436 to 438 (removed in mature form); the sequence is QLS.

It belongs to the battenin family. In terms of assembly, interacts with DCTN1, KIF3A, RAB7A and RILP. Interacts with CLN5. In terms of processing, highly glycosylated. Post-translationally, farnesylation is important for trafficking to lysosomes.

It is found in the lysosome membrane. The protein resides in the late endosome. The protein localises to the lysosome. In terms of biological role, mediates microtubule-dependent, anterograde transport connecting the Golgi network, endosomes, autophagosomes, lysosomes and plasma membrane, and participates in several cellular processes such as regulation of lysosomal pH, lysosome protein degradation, receptor-mediated endocytosis, autophagy, transport of proteins and lipids from the TGN, apoptosis and synaptic transmission. Facilitates the proteins transport from trans-Golgi network (TGN)-to other membrane compartments such as transport of microdomain-associated proteins to the plasma membrane, IGF2R transport to the lysosome where it regulates the CTSD release leading to regulation of CTSD maturation and thereby APP intracellular processing. Moreover regulates CTSD activity in response to osmotic stress. Also binds galactosylceramide and transports it from the trans Golgi to the rafts, which may have immediate and downstream effects on cell survival by modulating ceramide synthesis. At the plasma membrane, regulates actin-dependent events including filopodia formation, cell migration, and pinocytosis through ARF1-CDC42 pathway and also the cytoskeleton organization through interaction with MYH10 and fodrin leading to the regulation of the plasma membrane association of Na+, K+ ATPase complex. Regulates synaptic transmission in the amygdala, hippocampus, and cerebellum through regulation of synaptic vesicles density and their proximity to active zones leading to modulation of short-term plasticity and age-dependent anxious behavior, learning and memory. Regulates autophagic vacuoles (AVs) maturation by modulating the trafficking between endocytic and autophagolysosomal/lysosomal compartments, which involves vesicle fusion leading to regulation of degradation process. Also participates in cellular homeostasis of compounds such as, water, ions, amino acids, proteins and lipids in several tissue namely in brain and kidney through regulation of their transport and synthesis. In Macaca fascicularis (Crab-eating macaque), this protein is Battenin.